Here is a 151-residue protein sequence, read N- to C-terminus: 6,7-dimethyl-8-ribityllumazine synthase (151 aa).

Residues F23, 55–57 (AYE), and 79–81 (AVI) contribute to the 5-amino-6-(D-ribitylamino)uracil site. Residue 84 to 85 (AT) coordinates (2S)-2-hydroxy-3-oxobutyl phosphate. H87 acts as the Proton donor in catalysis. F111 serves as a coordination point for 5-amino-6-(D-ribitylamino)uracil. Residue R125 coordinates (2S)-2-hydroxy-3-oxobutyl phosphate.

It belongs to the DMRL synthase family.

It carries out the reaction (2S)-2-hydroxy-3-oxobutyl phosphate + 5-amino-6-(D-ribitylamino)uracil = 6,7-dimethyl-8-(1-D-ribityl)lumazine + phosphate + 2 H2O + H(+). The protein operates within cofactor biosynthesis; riboflavin biosynthesis; riboflavin from 2-hydroxy-3-oxobutyl phosphate and 5-amino-6-(D-ribitylamino)uracil: step 1/2. In terms of biological role, catalyzes the formation of 6,7-dimethyl-8-ribityllumazine by condensation of 5-amino-6-(D-ribitylamino)uracil with 3,4-dihydroxy-2-butanone 4-phosphate. This is the penultimate step in the biosynthesis of riboflavin. The polypeptide is 6,7-dimethyl-8-ribityllumazine synthase (Leptospira interrogans serogroup Icterohaemorrhagiae serovar copenhageni (strain Fiocruz L1-130)).